A 479-amino-acid chain; its full sequence is Aspartyl/glutamyl-tRNA(Asn/Gln) amidotransferase subunit B (479 aa).

This sequence belongs to the GatB/GatE family. GatB subfamily. As to quaternary structure, heterotrimer of A, B and C subunits.

The enzyme catalyses L-glutamyl-tRNA(Gln) + L-glutamine + ATP + H2O = L-glutaminyl-tRNA(Gln) + L-glutamate + ADP + phosphate + H(+). It catalyses the reaction L-aspartyl-tRNA(Asn) + L-glutamine + ATP + H2O = L-asparaginyl-tRNA(Asn) + L-glutamate + ADP + phosphate + 2 H(+). Its function is as follows. Allows the formation of correctly charged Asn-tRNA(Asn) or Gln-tRNA(Gln) through the transamidation of misacylated Asp-tRNA(Asn) or Glu-tRNA(Gln) in organisms which lack either or both of asparaginyl-tRNA or glutaminyl-tRNA synthetases. The reaction takes place in the presence of glutamine and ATP through an activated phospho-Asp-tRNA(Asn) or phospho-Glu-tRNA(Gln). The protein is Aspartyl/glutamyl-tRNA(Asn/Gln) amidotransferase subunit B of Geotalea daltonii (strain DSM 22248 / JCM 15807 / FRC-32) (Geobacter daltonii).